The primary structure comprises 342 residues: UDP-3-O-(3-hydroxymyristoyl)glucosamine N-acyltransferase (342 aa).

The active-site Proton acceptor is His-239.

It belongs to the transferase hexapeptide repeat family. LpxD subfamily. As to quaternary structure, homotrimer.

It catalyses the reaction a UDP-3-O-[(3R)-3-hydroxyacyl]-alpha-D-glucosamine + a (3R)-hydroxyacyl-[ACP] = a UDP-2-N,3-O-bis[(3R)-3-hydroxyacyl]-alpha-D-glucosamine + holo-[ACP] + H(+). The catalysed reaction is UDP-3-O-[(3R)-3-hydroxytetradecanoyl]-alpha-D-glucosamine + (3R)-hydroxytetradecanoyl-[ACP] = UDP-2-N,3-O-bis[(3R)-3-hydroxytetradecanoyl]-alpha-D-glucosamine + holo-[ACP] + H(+). It functions in the pathway glycolipid biosynthesis; lipid IV(A) biosynthesis; lipid IV(A) from (3R)-3-hydroxytetradecanoyl-[acyl-carrier-protein] and UDP-N-acetyl-alpha-D-glucosamine: step 3/6. Functionally, catalyzes the N-acylation of UDP-3-O-(hydroxytetradecanoyl)glucosamine using 3-hydroxytetradecanoyl-ACP as the acyl donor. Is involved in the biosynthesis of lipid A, a phosphorylated glycolipid that anchors the lipopolysaccharide to the outer membrane of the cell. This is UDP-3-O-(3-hydroxymyristoyl)glucosamine N-acyltransferase from Photorhabdus laumondii subsp. laumondii (strain DSM 15139 / CIP 105565 / TT01) (Photorhabdus luminescens subsp. laumondii).